Reading from the N-terminus, the 492-residue chain is Trehalose-6-phosphate synthase (492 aa).

R25 contributes to the D-glucose 6-phosphate binding site. 45–46 (GG) provides a ligand contact to UDP-alpha-D-glucose. 2 residues coordinate D-glucose 6-phosphate: Y101 and D155. 2 residues coordinate UDP-alpha-D-glucose: R297 and K302. R335 contacts D-glucose 6-phosphate. 400–404 (LVAKE) is a UDP-alpha-D-glucose binding site.

The protein belongs to the glycosyltransferase 20 family. In terms of assembly, homotetramer.

It carries out the reaction ADP-alpha-D-glucose + D-glucose 6-phosphate = alpha,alpha-trehalose 6-phosphate + ADP + H(+). It catalyses the reaction CDP-alpha-D-glucose + D-glucose 6-phosphate = alpha,alpha-trehalose 6-phosphate + CDP + H(+). The catalysed reaction is GDP-alpha-D-glucose + D-glucose 6-phosphate = alpha,alpha-trehalose 6-phosphate + GDP + H(+). The enzyme catalyses TDP-alpha-D-glucose + D-glucose 6-phosphate = 5-methyl-UDP + alpha,alpha-trehalose 6-phosphate + H(+). It carries out the reaction D-glucose 6-phosphate + UDP-alpha-D-glucose = alpha,alpha-trehalose 6-phosphate + UDP + H(+). It functions in the pathway glycan biosynthesis; trehalose biosynthesis. Functionally, probably involved in the osmoprotection via the biosynthesis of trehalose and in the production of glycogen and alpha-glucan via the TreS-Pep2 branch involved in the biosynthesis of maltose-1-phosphate (M1P). Catalyzes the transfer of glucose from UDP-glucose (UDP-Glc) to D-glucose 6-phosphate (Glc-6-P) to form trehalose-6-phosphate. Probably also able to use ADP-Glc, CDP-Glc, GDP-Glc and TDP-Glc as glucosyl donors. The chain is Trehalose-6-phosphate synthase from Mycolicibacterium paratuberculosis (strain ATCC BAA-968 / K-10) (Mycobacterium paratuberculosis).